We begin with the raw amino-acid sequence, 578 residues long: Synaptic defective enhancer 1 (578 aa).

Disordered stretches follow at residues Met-1–Thr-62, Ser-173–Gln-216, Pro-426–Ala-457, and Leu-474–Phe-578. Positions Pro-444 to Ser-455 are enriched in low complexity. 2 stretches are compositionally biased toward pro residues: residues Pro-481–Thr-491 and Ile-500–Asn-542. The span at Asn-565–Phe-578 shows a compositional bias: low complexity.

As to quaternary structure, may interact (via C-terminus) with ssup-72; the interaction may prevent ssup-72 binding to RNA polymerase II subunit ama-1. As to expression, expressed in germline, oocytes, epidermis, pharyngeal bulb and neurons.

It localises to the nucleus. The protein localises to the nucleus speckle. Functionally, acts as a negative regulator of nuclear pre-mRNA 3'-end processing (mRNA polyadenylation). Plays a role in tissue-specific expression of protein isoforms by regulating differential processing of pre-mRNA 3'-end (alternative polyadenylation). In neurons, regulates alternative polyadenylation of specific mRNAs including unc-44 and dlk-1 by interacting with phosphatase ssup-72 and thus preventing ssup-72 dephosphorylation of RNA polymerase II subunit ama-1. Specifically, alters the usage of internal polyadenylation sites (PAS) to promote the production of neuron-specific unc-44 isoform and dlk-1 isoform c, both required for normal synapse and axon development. Conversely, in the epidermis, by inhibiting ssup-72 function, promotes the usage of an internal PAS preventing the production of one of unc-44 isoforms. In neurons, also negatively regulates protein levels of pre-RNA processing protein psf-2. In Caenorhabditis elegans, this protein is Synaptic defective enhancer 1.